A 134-amino-acid chain; its full sequence is Kinetochore-binding protein 3 (134 aa).

The protein resides in the nucleus. Its subcellular location is the chromosome. The protein localises to the centromere. It is found in the kinetochore. This chain is Kinetochore-binding protein 3 (kbp-3), found in Caenorhabditis elegans.